A 628-amino-acid polypeptide reads, in one-letter code: ATP-binding cassette sub-family F member 2 (628 aa).

The tract at residues 1-57 is disordered; it reads MPSDLAKKKAAKKKEAAKARQRPRKGHEENGDAVTEPQVAEEKIEEANGRETTGDGE. Positions 40–53 are enriched in basic and acidic residues; the sequence is AEEKIEEANGRETT. ABC transporter domains are found at residues 91-330 and 401-618; these read VHII…ENQM and IMVQ…VDEE. 123–130 is a binding site for ATP; the sequence is GLNGIGKS. Threonine 223 carries the phosphothreonine modification. Lysine 309 is modified (N6-acetyllysine). 435–442 provides a ligand contact to ATP; it reads GPNGAGKS. A Phosphoserine modification is found at serine 517.

It belongs to the ABC transporter superfamily. ABCF family. EF3 subfamily.

This is ATP-binding cassette sub-family F member 2 from Mus musculus (Mouse).